Here is a 351-residue protein sequence, read N- to C-terminus: Bifunctional UDP-glucose 4-epimerase and UDP-xylose 4-epimerase 3 (351 aa).

Residue 8 to 39 (NILVTGGAGFIGTHTVVQLLNQGFKVTIIDNL) participates in NAD(+) binding. Ser134 serves as a coordination point for substrate. The active-site Proton acceptor is Tyr158.

This sequence belongs to the NAD(P)-dependent epimerase/dehydratase family. Homodimer. Heterodimer. NAD(+) is required as a cofactor. In terms of tissue distribution, ubiquitous.

The enzyme catalyses UDP-alpha-D-glucose = UDP-alpha-D-galactose. It carries out the reaction UDP-beta-L-arabinopyranose = UDP-alpha-D-xylose. It functions in the pathway carbohydrate metabolism; galactose metabolism. The protein operates within nucleotide-sugar biosynthesis; UDP-L-arabinose biosynthesis; UDP-L-arabinose from UDP-alpha-D-xylose: step 1/1. Its pathway is cell wall biogenesis; cell wall polysaccharide biosynthesis. Strongly inhibited by UDP. Catalyzes the interconversion between UDP-glucose and UDP-galactose and the interconversion between UDP-arabinose and UDP-xylose. Cooperates with UGE2 in pollen development. May preferentially act in the UDP-galactose to UDP-glucose direction, therefore displaying a role in carbohydrate catabolism. The protein is Bifunctional UDP-glucose 4-epimerase and UDP-xylose 4-epimerase 3 (UGE3) of Arabidopsis thaliana (Mouse-ear cress).